The following is a 305-amino-acid chain: tRNA pseudouridine synthase B (305 aa).

D39 serves as the catalytic Nucleophile.

This sequence belongs to the pseudouridine synthase TruB family. Type 1 subfamily.

It catalyses the reaction uridine(55) in tRNA = pseudouridine(55) in tRNA. Functionally, responsible for synthesis of pseudouridine from uracil-55 in the psi GC loop of transfer RNAs. This Staphylococcus aureus (strain MRSA252) protein is tRNA pseudouridine synthase B.